A 5125-amino-acid polypeptide reads, in one-letter code: MYYLALSSGFLGQAIKTSILAYLASVLLAASQGVFPRLENVGAFKKVSIVPSHATCGYPGPSTFCRSAVAAEHAQLCAERLCIQDCPYRSASPPYTALLEGLRSCIPADHGDLHPYSRSNSTSFIFGSHKNCPSLQAPRLAAEFTLAVWLKPERGSTMCVLEKTADGQIVFKVTISERETMFYYRTVNGLQPPIKVMTPGRILMKKWIHHTVQVHETEVSSFVDGLEENSTAFDTRTLRDSIMDSVPSTVLIGQSLNGSELFVGRMQDFRLYNVSLTNREILELFSGDLPHLHIQSHCRCPGSHPRVHPSVQQYCIPNGVEDTLQHRVSRLNPEAHPLSFINDDDVATSWISHVFTDITQLNQGVAISIDLENGQYQVFQITIRFSSPQPVAMRIQRKKADKSLWEDWQYFARNCSVWGMKNNGDLENPNSVNCLQFPEFIPFSHGNVTFDLLTSGQKHRPGDYDFYNSSLLQEFMTATQIRLYFRGLFYPAWHTVDSRHRYYAVDEITIIGRCQCHGHAETCDRTRRPYRCLCSPHSFTEGPQCGRCSPLYNDKPFRSGNKVHAFNCKPCQCHGHASSCHYDASMDPFPLEYNRGGGGVCDDCQHHTTGRNCESCQDYFYRPIGADPADPEVCKHCDCNRDGTRNGSLLCDLVGDQCDCKRRVSGRRCFRCHIGFYGLQALDPDCCRPCDCNPSGTVDGDITCHHNSGQCSCKANVIGLRCDRCSFGFKFLRSLNADGCEPCHCNLHGSVNQLCDPLSGQCVCKKEAKGLRCDVCRENFYGLPWSACEVCDCNRAGTQAGTVCDAETGQCVCKPSVGGRRCSECKEGYFNLRQNDSHLCLPCNCEKTGTVNGSLLCDKSTGQCPCKLGVTGLRCHQCKPHRFNLTMDNPQGCQACDCDSLGTLLGSMCDPVSGQCLCLPHRQERRCVQCQPGCYSSPSNATGCLPCLCHTVATKNCICNSVTGHCYCPDPSTTGLSWHQCQDRYFRFDPLTGRCRPCHCHVAGASNGTCDAVTGQCFCKEFVTGSKCDTCVPGASHLDVNNLLACSKTPSQQPPPRGRVQSSSAINLSWSPPDFPNAHWLTYTLFRDDSEIYTTDDQHPYYTQYFLDTSLSPHTAYSYYIETSNVHSSTRSIPVIYKTKPEGSEGHLNLTHIIPVASDSITLVWTGLSNHSGPIEKYVLSCTPVDHTEPCVSYEGPETSATIRNLVPFTQYCFSVQGCTNGSCLYSSPITVTTAQAPPQRQEPPTVWKISPTELKVEWSRPVDSNGVIIRYELYMKRWPSTEESLVFESHGWFHSHPASPSANQSENVLQDPQVSTVLSGLDPHTEYAFRVLAVNMAGSVSSAWASERTGESAPVFMAAPSVSPLSPYSLSVSWEKPAENFTRGEIIGYKISMVSERSPQRDVPVMCSKLVHFAESQDQSYIVQRLKPYRTYSFTVSLCASVGCVTSALGEGQTLAAAPAQLRSPMVTGVTSTTVHIRWLPPAEVNGPPPLYRLERRESFLPAATAARTKGTRFMGDGYCRFPRTAHPDFIGIKASFWTRVPEGLILLALHPDNQEEYFALQLKSGRPYFLYNPQGSLVEVTTADDHSQQYSDGQWHEITAIRHQSFGQITLDEQYTDSSASLNGSSVTGGYTRLFVGGLPQGHTILQKRPVRRGFVGCLKDVSILKGSSPSGTWLPLDWQSSEEQVNVHHSWEGCPTDLEEGVQFLGAGFLELRSDTFHAAKDFEISLKFQTDQLNGLLLFIHNTEGLDFLAMELKSGLLSFQLNSSRILTRVEVRLGRTHCDGKWNRVTIRREGSMVSVGVNELTKSTSRAGDQPPLLTSPVYLGGIPQELQASYRHLTLEQGFRGCVKEVAFTRGAVVNLASVSSRAVRVNQDGCLSSDSTVNCGGNDSILVYRGSRQSVYESGLQPFTEYLYRVTASHKGGSVSSDWSRGRTLGSAPHSVPTPSRAQSINGYSVEVAWNEPAMVKGVLEKYILKAYSEDSAQPHMPSASTEFNNTDIRTGILTGLHPFHSYAVTLTACSRAGCTESSRALSISTPQEAPQEVQAPVAEALPNSLSFFWSPPRQANGIITQYSLYMDGRLVYTGKGQNYTVTDLRVFTAYEITVGACTRAGCTNSSRVILHTAQLPPERVDPPVLAILDSRTVHIQWKQPRQLNGILERYILYTLNPTHNSTVWDVVYNSTENLQTHLLYHLSPGCLYLIKLGACTGGGCTTSEPSQALMDETVPEGVPAPRAHSHSPDSFNISWTEPGHPNGVITTYELYLDGTLIHNSSELSCHAYGFDPGSLHTFQVQACTAKGCALGPLVENRTLEAPPEGTVNLFVKPEGSREAAVRWDAPPHPNGRLTYSVLITGNFYADQAGDNYTLLSSTKTVHSSKGDRLWVLVDRLVPCSNYTVQVNASNSQGSVLSDRVSVEMPPGAPDGLLSPRLAAATPTSLQVVWSTPARNNAPGSPRYQLQMRPDPSTRGLLELFPIPSALLSYEVTGLQPFTVYEFRLVATNGFGSAYSDWTPLMTTEDKPGPMDAPVLNVKAGMMSVAWRKPTECNGAITHYNIYQHGRLYLTVSGGVTNCTVVHLRPHTAYQFQIEACSSKGCSMSPASETVWTLPGTPEGIPGPELLPYTPTKIIVSWQPPTHLDGLVENITIERRVKEQEEVRSLVILPRSQAVRFIDNDPALRPWTHYEYRVLGSTLNGGTNSSAWVEVTTRPSRPSGVQPPTVHVLGPDAVEVTWKAPLIRNGDIVSYEIRMPDPLIEITNVTSFVLSHLVKHLIPFTNYSVSIVACSGGHGYLGGCTESLPTFATTHPALPQELTPLSISLLGQSYVGISWQPPSKPNGPNLRYELLRRKIQQPLASNPPEDLNLWHNIYSGTRRFYEDKGLSRFTTYEYKLFVHNSLGFTPSQEVTVTTLAGSPERGATVTASILNHTAIDVRWKRPTFQDLQGDVEYYTLFWSSGTSVESLKIFPDVDFHVIGHLAPNVEYQVFLLVFNGVHAINSTVVRVTTWEEEPRGMRPPEVVIINSTAVRVIWTSPSNPNAVITESSVYANNELHKAGAGAPGSFTLEDLSPFTIYDIQVEVCTKDACVKSSGTQVSTAEDTPSGISIPIIRDITSRSLQIDWTAPGNPNGIILGYDVLRKTWRLCSETQKLTDKPRDELCKAVKCQYPGNVCGHTCYSPGTKVCCDGLLYDPQPGYSCCEEKYIALLPNSTGVCCGGRQREAQPDHQCCSGHYIRILPGEICCPDERHNRVSVGFGDACCGTMPYATSGSQVCCAGKLQDGYRRQCCGGEMVSQDFKCCGGGEEGMVYSSLPGMLCCGQDYVNMSDTICCSASSGDSKAHVRGSDPMPVRCCHTELIPESQQCCDGVGYNPVKYVCSDEISAGMATEETRVCATVCPATMRATAHCGQCDFNATTHICTVSRGPLNPIGKETAEGLCSTAEEIVHSGDENTRSFIDTDLEPSTVYEYRVSVWNSYGRGFSQSVRASTREDVPQGVTAPRWARTGNHEDVIFLTWKEPTQSNGPITHYILLRDGRERFQGAALSFTDTQGIQPLQEYSYQLKACTAAGCADSCKVVATATRGVLESVPPPNITAQSPETLHLSWSVPEKRNDAIKEYQLWLDGKGLIYTDTNDRRQHTVTGLQPHTNYSFTLSACTSVGCTSSEPSVGQTLQAAPQGVWVTPRHIIINSTTVELYWNPPERPNGVISQYRLRRNGSLLLVGGRDDQSFTDKNLEPNSRYIYTLEARTGGGSSLSEEYLVQMPMWTPEDVHPPCNVTVLGSDSIFVAWPAPGILLPKIPVEYSILLSGGNMMLLTFSVGLRQSAYLKNLAPFTQYEIRIQACQEGCGVSPGTHVRTLEAAPVGLMPPLLKALGSHCIEVKWTPPTRPNGIITSYVIHRRPADTEEESLLFVWSEGALEFTDDTDTLRPFTLYEYRVRAWNSKGVVDSPWSSVQTLEAPPQDLPAPWVQVTSAHSVLLNWTEPEAPNGLISQYHVIYQERPDEAAPGSSTVHAFTVKGSSRQAHLFGLEPFTTYHIGVAAVNRAGKVSSPWTLIKTLESAPSGLMNFTAEQREGGRALLLQWSEPVRTNGVIKAYNVFSDGLPEYSGLGRQFLFRRLAPFTLYILTLEACTAAGCAHSVPQTLWTEEAPPDSQMAPTIQSVEPTSVRLHWSQPANPNGKIIRYEVIRRRLQGEDWGNRTVQADENTVFTEYNTEGNGWVCTDTGLQPWGLYSYRICTWNSAGHTCSSWSVVRTSQAPPDGLSPPEVSYVSTSPLQLLISWFAPRHTNGVIQSYRLQRNGVFAAASFNSSTFSYTDGQLLPFTTYSYAVLACTGGGCCTSEPTNITTPEASPAGVSPPVLWAIGAHQINVSWSPPSVPNGKIAKYLLHCDGEEHLAGQDLSLLLSNLRPFTQYNVSLVACTKGGCTASRVASAWTMEAPPEDMDPPTLHVMGPESIEITWAPPRNPHGQIRSYELRRDGAIVYIGLETRYHDFILTPGVQYGYTVTATNSRGSVLSPLVKGQTSPSAPSGLQPPKLRAGEALELLVNWNPPVRTNGKITNYTLFIRELLEGEIRTMCINTTHSSFGTRSLAVKHLKPFHRYEVRVQACTALGCTSSEWTPTQTSEIPPLLQPAPHLEVQTAAGGFQPIVAVWWAGPLQPHGKIVRFELYRRQTASWPGTSSPLLIYNGSLSSFTDRELLPFTEYEYQVWAVNSAGKVASNWTWCRTGPAPPEGLKAPTFHTVSSTQAVVNISAPSKPNGNISLFRVFSNSSGTHVMLSEGMATQQTLHDLRPFTTYAIGVEACTCFNCCSRGPTAELRTHPAPPSGLSPPQVQTLGSRMASFQWAPPQLPNGVIHSYELQLHRACPPDSAPHCPPSPTERKYWGPGHRASLAGLQPNTAYGVQVVAHNEAGSTASGWTSFRTKKEMPQYQALFSVDSNASTVWVDWSGTFVLNGQLKEYVVTDGGRRVYSGLDTTLYIPRTVDKTFFFQVTCTTDIGSVKTPLVQYDATTGFGLVLTTPGGKKGAGTKSTEFYTDTRLPRSGTPVSIRSSQSVSVLRIPSQSQLSHAYSQGSLHRSVSQLMDSPDKKALTEDSLWETIMGHSSGLCVDEEELMNAIKGFSSVTKEHTAFTDTHL.

A signal peptide spans Met-1 to Gly-33. N-linked (GlcNAc...) asparagine glycosylation is found at Asn-120, Asn-229, Asn-257, Asn-273, Asn-414, Asn-447, and Asn-468. Positions Asn-273–Arg-513 constitute a Laminin N-terminal domain. Disulfide bonds link Cys-514–Cys-523, Cys-516–Cys-532, Cys-534–Cys-545, Cys-548–Cys-568, Cys-571–Cys-580, Cys-573–Cys-601, Cys-604–Cys-613, Cys-616–Cys-634, Cys-637–Cys-651, Cys-639–Cys-658, Cys-660–Cys-669, Cys-672–Cys-687, Cys-690–Cys-704, Cys-692–Cys-711, Cys-713–Cys-722, Cys-725–Cys-740, Cys-743–Cys-755, Cys-745–Cys-762, Cys-764–Cys-773, Cys-776–Cys-788, Cys-791–Cys-804, Cys-793–Cys-811, Cys-813–Cys-822, Cys-825–Cys-840, Cys-843–Cys-857, Cys-845–Cys-864, Cys-866–Cys-875, Cys-878–Cys-893, Cys-896–Cys-909, Cys-898–Cys-916, Cys-918–Cys-927, Cys-930–Cys-944, Cys-947–Cys-959, Cys-949–Cys-966, Cys-981–Cys-995, Cys-998–Cys-1010, Cys-1000–Cys-1017, Cys-1019–Cys-1028, and Cys-1031–Cys-1046. Laminin EGF-like domains are found at residues Cys-514 to Pro-570, Cys-571 to His-636, Cys-637 to Pro-689, Cys-690 to Pro-742, Cys-743 to Val-790, Cys-791 to Pro-842, Cys-843 to Ala-895, Cys-896 to Pro-946, Cys-947 to Pro-997, and Cys-998 to Lys-1048. The N-linked (GlcNAc...) asparagine glycan is linked to Asn-646. N-linked (GlcNAc...) asparagine glycosylation is found at Asn-835 and Asn-852. N-linked (GlcNAc...) asparagine glycosylation occurs at Asn-884. The N-linked (GlcNAc...) asparagine glycan is linked to Asn-940. N-linked (GlcNAc...) asparagine glycosylation occurs at Asn-1007. Fibronectin type-III domains follow at residues Pro-1054–Glu-1142, Gly-1146–Gln-1240, Arg-1241–Val-1356, and Phe-1357–Ala-1461. 6 N-linked (GlcNAc...) asparagine glycosylation sites follow: Asn-1067, Asn-1149, Asn-1170, Asn-1221, Asn-1304, and Asn-1381. 2 Laminin G-like domains span residues Thr-1510–Cys-1697 and Glu-1702–Cys-1879. 2 disulfide bridges follow: Cys-1660–Cys-1697 and Cys-1850–Cys-1879. Fibronectin type-III domains follow at residues Thr-1857–His-1943, Val-1945–Glu-2042, Ala-2043–Glu-2132, Arg-2133–Glu-2230, Gly-2231–Glu-2318, Gly-2319–Gly-2421, Gly-2425–Asp-2519, Lys-2520–Gly-2613, Ile-2614–Ser-2709, Gly-2713–Ala-2806, Leu-2807–Gly-2910, Arg-2914–Glu-3005, Gly-3009–Gly-3099, Ala-3380–Asp-3485, Val-3486–Val-3577, Ser-3580–Gln-3670, Val-3672–Asp-3762, Pro-3765–Ala-3852, Ala-3853–Ala-3950, Pro-3951–Ser-4054, Gly-4055–Asp-4143, Ser-4144–Asp-4251, Gly-4252–Ala-4344, Gly-4345–Glu-4432, Asp-4433–Ser-4517, Ala-4518–Leu-4620, Pro-4625–Ala-4720, Pro-4721–Ala-4813, and Pro-4814–Glu-4916. The interval Ser-1930–Arg-1950 is disordered.

Interacts with collagen IV and fibronectin via its laminin EGF-like domains. Interaction with collagen may be required for stable integration into the basement membrane. Interacts with NINL. Interacts with USH1C. Interacts (via the cytoplasmic region) with PDZD7. Component of USH2 complex, composed of ADGRV1, PDZD7, USH2A and WHRN. Interacts with ADGRV1/MASS1 (via N-terminal PDZ domain). Interacts (via the cytoplasmic region) with WHRN. Interacts (via the cytoplasmic region) with VEZT and MYO7A (via MyTH4-FERM domains); the interaction associates VEZT with the USH2 complex at the stereocilia base. In terms of tissue distribution, present in the synaptic terminals of inner ear hair cells (at protein level). Predominantly expressed in the retina and cochlea. Weakly expressed in brain and kidney. Detectable from E17 in the neural epithelium, but not in the retinal pigment epithelium (RPE) of the developing retina. After birth, it is expressed at P7 and remains expressed during adulthood.

It is found in the secreted. The protein localises to the cell projection. The protein resides in the stereocilium membrane. Its subcellular location is the photoreceptor inner segment. Involved in hearing and vision as member of the USH2 complex. In the inner ear, required for the hair bundle ankle formation, which connects growing stereocilia in developing cochlear hair cells. In retina photoreceptors, the USH2 complex is required for the maintenance of periciliary membrane complex that seems to play a role in regulating intracellular protein transport. The sequence is that of Usherin (Ush2a) from Rattus norvegicus (Rat).